A 257-amino-acid polypeptide reads, in one-letter code: NAD-capped RNA hydrolase NudC (257 aa).

Residue R69 participates in substrate binding. Residues C98 and C101 each contribute to the Zn(2+) site. E111 provides a ligand contact to substrate. Residues C116 and C119 each contribute to the Zn(2+) site. Y124 lines the substrate pocket. Residues 125-248 enclose the Nudix hydrolase domain; sequence PQIAPCIIVA…TVARRLIEDT (124 aa). 3 residues coordinate a divalent metal cation: A158, E174, and E178. The Nudix box signature appears at 159 to 180; sequence GFVEVGETLEQAVAREVMEESG. Substrate is bound at residue 192 to 199; sequence QPWPFPQS. An a divalent metal cation-binding site is contributed by E219. Residue A241 participates in substrate binding.

Belongs to the Nudix hydrolase family. NudC subfamily. Homodimer. It depends on Mg(2+) as a cofactor. Requires Mn(2+) as cofactor. Zn(2+) serves as cofactor.

It catalyses the reaction a 5'-end NAD(+)-phospho-ribonucleoside in mRNA + H2O = a 5'-end phospho-adenosine-phospho-ribonucleoside in mRNA + beta-nicotinamide D-ribonucleotide + 2 H(+). The enzyme catalyses NAD(+) + H2O = beta-nicotinamide D-ribonucleotide + AMP + 2 H(+). It carries out the reaction NADH + H2O = reduced beta-nicotinamide D-ribonucleotide + AMP + 2 H(+). In terms of biological role, mRNA decapping enzyme that specifically removes the nicotinamide adenine dinucleotide (NAD) cap from a subset of mRNAs by hydrolyzing the diphosphate linkage to produce nicotinamide mononucleotide (NMN) and 5' monophosphate mRNA. The NAD-cap is present at the 5'-end of some mRNAs and stabilizes RNA against 5'-processing. Has preference for mRNAs with a 5'-end purine. Catalyzes the hydrolysis of a broad range of dinucleotide pyrophosphates. The chain is NAD-capped RNA hydrolase NudC from Salmonella typhimurium (strain LT2 / SGSC1412 / ATCC 700720).